Consider the following 594-residue polypeptide: Proteasome-associated ATPase (594 aa).

Residues 1 to 12 (MTETSANKPENT) are compositionally biased toward polar residues. A disordered region spans residues 1-20 (MTETSANKPENTQAHEGRDY). The stretch at 18 to 71 (RDYSVLERQFNVLRDKLRNVDRQLAAATQNNTKMTTTLQSAKAEILRLKSALEK) forms a coiled coil. Position 282-287 (282-287 (GCGKTL)) interacts with ATP. Positions 593–594 (YL) are docks into pockets in the proteasome alpha-ring.

The protein belongs to the AAA ATPase family. Homohexamer. Assembles into a hexameric ring structure that caps the 20S proteasome core. Strongly interacts with the prokaryotic ubiquitin-like protein Pup through a hydrophobic interface; the interacting region of ARC lies in its N-terminal coiled-coil domain. There is one Pup binding site per ARC hexamer ring. Upon ATP-binding, the C-terminus of ARC interacts with the alpha-rings of the proteasome core, possibly by binding to the intersubunit pockets.

Its pathway is protein degradation; proteasomal Pup-dependent pathway. In terms of biological role, ATPase which is responsible for recognizing, binding, unfolding and translocation of pupylated proteins into the bacterial 20S proteasome core particle. May be essential for opening the gate of the 20S proteasome via an interaction with its C-terminus, thereby allowing substrate entry and access to the site of proteolysis. Thus, the C-termini of the proteasomal ATPase may function like a 'key in a lock' to induce gate opening and therefore regulate proteolysis. The sequence is that of Proteasome-associated ATPase from Renibacterium salmoninarum (strain ATCC 33209 / DSM 20767 / JCM 11484 / NBRC 15589 / NCIMB 2235).